We begin with the raw amino-acid sequence, 253 residues long: Chitooligosaccharide deacetylase (253 aa).

Mg(2+) contacts are provided by histidine 61 and histidine 126.

It belongs to the YdjC deacetylase family. ChbG subfamily. In terms of assembly, homodimer. It depends on Mg(2+) as a cofactor.

It is found in the cytoplasm. It catalyses the reaction N,N'-diacetylchitobiose + H2O = N-acetyl-beta-D-glucosaminyl-(1-&gt;4)-D-glucosamine + acetate. It carries out the reaction diacetylchitobiose-6'-phosphate + H2O = N'-monoacetylchitobiose-6'-phosphate + acetate. It functions in the pathway glycan degradation; chitin degradation. Involved in the degradation of chitin. ChbG is essential for growth on the acetylated chitooligosaccharides chitobiose and chitotriose but is dispensable for growth on cellobiose and chitosan dimer, the deacetylated form of chitobiose. Deacetylation of chitobiose-6-P and chitotriose-6-P is necessary for both the activation of the chb promoter by the regulatory protein ChbR and the hydrolysis of phosphorylated beta-glucosides by the phospho-beta-glucosidase ChbF. Catalyzes the removal of only one acetyl group from chitobiose-6-P to yield monoacetylchitobiose-6-P, the inducer of ChbR and the substrate of ChbF. In Yersinia enterocolitica serotype O:8 / biotype 1B (strain NCTC 13174 / 8081), this protein is Chitooligosaccharide deacetylase.